The primary structure comprises 507 residues: ATP synthase subunit alpha, chloroplastic (507 aa).

170 to 177 contacts ATP; it reads GDRQTGKT.

Belongs to the ATPase alpha/beta chains family. F-type ATPases have 2 components, CF(1) - the catalytic core - and CF(0) - the membrane proton channel. CF(1) has five subunits: alpha(3), beta(3), gamma(1), delta(1), epsilon(1). CF(0) has four main subunits: a, b, b' and c.

The protein resides in the plastid. It is found in the chloroplast thylakoid membrane. It catalyses the reaction ATP + H2O + 4 H(+)(in) = ADP + phosphate + 5 H(+)(out). Produces ATP from ADP in the presence of a proton gradient across the membrane. The alpha chain is a regulatory subunit. The sequence is that of ATP synthase subunit alpha, chloroplastic from Oryza nivara (Indian wild rice).